Here is a 443-residue protein sequence, read N- to C-terminus: NADH-quinone oxidoreductase subunit D 1 (443 aa).

This sequence belongs to the complex I 49 kDa subunit family. As to quaternary structure, NDH-1 is composed of 14 different subunits. Subunits NuoB, C, D, E, F, and G constitute the peripheral sector of the complex.

Its subcellular location is the cell membrane. The catalysed reaction is a quinone + NADH + 5 H(+)(in) = a quinol + NAD(+) + 4 H(+)(out). Its function is as follows. NDH-1 shuttles electrons from NADH, via FMN and iron-sulfur (Fe-S) centers, to quinones in the respiratory chain. The immediate electron acceptor for the enzyme in this species is believed to be a menaquinone. Couples the redox reaction to proton translocation (for every two electrons transferred, four hydrogen ions are translocated across the cytoplasmic membrane), and thus conserves the redox energy in a proton gradient. The polypeptide is NADH-quinone oxidoreductase subunit D 1 (Streptomyces avermitilis (strain ATCC 31267 / DSM 46492 / JCM 5070 / NBRC 14893 / NCIMB 12804 / NRRL 8165 / MA-4680)).